A 440-amino-acid polypeptide reads, in one-letter code: 5-methylthioadenosine/S-adenosylhomocysteine deaminase (440 aa).

Residues histidine 70 and histidine 72 each contribute to the Zn(2+) site. The substrate site is built by glutamate 99 and histidine 191. Residue histidine 218 coordinates Zn(2+). 2 residues coordinate substrate: glutamate 221 and aspartate 306. Aspartate 306 is a Zn(2+) binding site.

It belongs to the metallo-dependent hydrolases superfamily. MTA/SAH deaminase family. It depends on Zn(2+) as a cofactor.

The catalysed reaction is S-adenosyl-L-homocysteine + H2O + H(+) = S-inosyl-L-homocysteine + NH4(+). It carries out the reaction S-methyl-5'-thioadenosine + H2O + H(+) = S-methyl-5'-thioinosine + NH4(+). Functionally, catalyzes the deamination of 5-methylthioadenosine and S-adenosyl-L-homocysteine into 5-methylthioinosine and S-inosyl-L-homocysteine, respectively. Is also able to deaminate adenosine. In Nitratidesulfovibrio vulgaris (strain DSM 19637 / Miyazaki F) (Desulfovibrio vulgaris), this protein is 5-methylthioadenosine/S-adenosylhomocysteine deaminase.